The sequence spans 803 residues: Nucleoporin nup82 (803 aa).

In terms of assembly, component of the nuclear pore complex (NPC). NPC constitutes the exclusive means of nucleocytoplasmic transport. NPCs allow the passive diffusion of ions and small molecules and the active, nuclear transport receptor-mediated bidirectional transport of macromolecules such as proteins, RNAs, ribonucleoparticles (RNPs), and ribosomal subunits across the nuclear envelope.

Its subcellular location is the nucleus. The protein resides in the nuclear pore complex. The protein localises to the nucleus membrane. Its function is as follows. Functions as a component of the nuclear pore complex (NPC). NPC components, collectively referred to as nucleoporins (NUPs), can play the role of both NPC structural components and of docking or interaction partners for transiently associated nuclear transport factors. This chain is Nucleoporin nup82, found in Schizosaccharomyces pombe (strain 972 / ATCC 24843) (Fission yeast).